The following is a 477-amino-acid chain: Cysteine--tRNA ligase (477 aa).

Cysteine 42 contributes to the Zn(2+) binding site. Positions 44 to 54 (ATVQGLPHIGH) match the 'HIGH' region motif. Zn(2+) is bound by residues cysteine 220, histidine 245, and glutamate 249. The 'KMSKS' region motif lies at 276 to 280 (KMSKS). Lysine 279 is an ATP binding site.

The protein belongs to the class-I aminoacyl-tRNA synthetase family. In terms of assembly, monomer. It depends on Zn(2+) as a cofactor.

Its subcellular location is the cytoplasm. The enzyme catalyses tRNA(Cys) + L-cysteine + ATP = L-cysteinyl-tRNA(Cys) + AMP + diphosphate. This is Cysteine--tRNA ligase from Mycolicibacterium smegmatis (strain ATCC 700084 / mc(2)155) (Mycobacterium smegmatis).